The chain runs to 279 residues: Coiled-coil domain-containing protein 106 (279 aa).

Positions 62–101 (KAQLHMALERNSWLQKRIEDLEEERDFLRCQLDKFISSAR) form a coiled coil. The segment covering 109 to 121 (RMKPGPRRVDGDS) has biased composition (basic and acidic residues). The segment at 109 to 173 (RMKPGPRRVD…FGKTKARERQ (65 aa)) is disordered. At Ser-129 the chain carries Phosphoserine. A Bipartite nuclear localization signal motif is present at residues 151-164 (KRQKQKGSTSRKRF). Basic residues predominate over residues 151-167 (KRQKQKGSTSRKRFGKT).

In terms of assembly, interacts with p53/TP53.

Its subcellular location is the nucleus. In terms of biological role, promotes the degradation of p53/TP53 protein and inhibits its transactivity. In Mus musculus (Mouse), this protein is Coiled-coil domain-containing protein 106 (Ccdc106).